The primary structure comprises 275 residues: Formamidopyrimidine-DNA glycosylase (275 aa).

Catalysis depends on P2, which acts as the Schiff-base intermediate with DNA. Residue E3 is the Proton donor of the active site. The active-site Proton donor; for beta-elimination activity is the K58. Positions 93, 111, and 156 each coordinate DNA. The FPG-type zinc finger occupies 241-275 (FVYDRAGQPCRVCNTPIRQIVQGQRSTYFCPTCQR). R265 functions as the Proton donor; for delta-elimination activity in the catalytic mechanism.

Belongs to the FPG family. Monomer. It depends on Zn(2+) as a cofactor.

The enzyme catalyses Hydrolysis of DNA containing ring-opened 7-methylguanine residues, releasing 2,6-diamino-4-hydroxy-5-(N-methyl)formamidopyrimidine.. It carries out the reaction 2'-deoxyribonucleotide-(2'-deoxyribose 5'-phosphate)-2'-deoxyribonucleotide-DNA = a 3'-end 2'-deoxyribonucleotide-(2,3-dehydro-2,3-deoxyribose 5'-phosphate)-DNA + a 5'-end 5'-phospho-2'-deoxyribonucleoside-DNA + H(+). In terms of biological role, involved in base excision repair of DNA damaged by oxidation or by mutagenic agents. Acts as a DNA glycosylase that recognizes and removes damaged bases. Has a preference for oxidized purines, such as 7,8-dihydro-8-oxoguanine (8-oxoG). Has AP (apurinic/apyrimidinic) lyase activity and introduces nicks in the DNA strand. Cleaves the DNA backbone by beta-delta elimination to generate a single-strand break at the site of the removed base with both 3'- and 5'-phosphates. In Burkholderia lata (strain ATCC 17760 / DSM 23089 / LMG 22485 / NCIMB 9086 / R18194 / 383), this protein is Formamidopyrimidine-DNA glycosylase.